The sequence spans 189 residues: ATP synthase subunit b (189 aa).

A helical transmembrane segment spans residues 7 to 27 (LLIAALAVAPLAHAAEGGFVG).

It belongs to the ATPase B chain family. F-type ATPases have 2 components, F(1) - the catalytic core - and F(0) - the membrane proton channel. F(1) has five subunits: alpha(3), beta(3), gamma(1), delta(1), epsilon(1). F(0) has three main subunits: a(1), b(2) and c(10-14). The alpha and beta chains form an alternating ring which encloses part of the gamma chain. F(1) is attached to F(0) by a central stalk formed by the gamma and epsilon chains, while a peripheral stalk is formed by the delta and b chains.

It is found in the cell inner membrane. Functionally, f(1)F(0) ATP synthase produces ATP from ADP in the presence of a proton or sodium gradient. F-type ATPases consist of two structural domains, F(1) containing the extramembraneous catalytic core and F(0) containing the membrane proton channel, linked together by a central stalk and a peripheral stalk. During catalysis, ATP synthesis in the catalytic domain of F(1) is coupled via a rotary mechanism of the central stalk subunits to proton translocation. Component of the F(0) channel, it forms part of the peripheral stalk, linking F(1) to F(0). The polypeptide is ATP synthase subunit b (Hyphomonas neptunium (strain ATCC 15444)).